A 613-amino-acid chain; its full sequence is Nuclear receptor subfamily 1 group D member 1 (613 aa).

Positions 1–48 are enriched in polar residues; sequence MTTLDSNNNTGGVITYIGSSGSSPNRTSPESLYSDSSNGSFQSLTQGC. The segment at 1–70 is required for phosphorylation by CSNK1E and cytoplasmic localization; that stretch reads MTTLDSNNNT…TQDPARSFGS (70 aa). The tract at residues 1 to 102 is disordered; sequence MTTLDSNNNT…SSFYNGSPPG (102 aa). The interval 1–129 is modulating; the sequence is MTTLDSNNNT…TSNITKLNGM (129 aa). A crucial for activation of GJA1 region spans residues 49–285; that stretch reads PTYFPPSPTG…PPRSPSPEPT (237 aa). Ser-55 and Ser-59 each carry phosphoserine; by GSK3-beta. Residues 69 to 102 are compositionally biased toward low complexity; it reads GSIPPSLGDDGSPSSSSSSSSSSSSSFYNGSPPG. The segment at residues 130 to 206 is a DNA-binding region (nuclear receptor); the sequence is VLLCKVCGDV…VGMSRDAVRF (77 aa). 2 consecutive NR C4-type zinc fingers follow at residues 133–153 and 170–194; these read CKVC…CEGC and CLKN…FKKC. N6-acetyllysine; by KAT5 occurs at positions 192 and 193. The interval 233–286 is disordered; the sequence is SSQCPLETPPTQHPTPGPMGPSPPPAPAPSPLVGFSQFPQQLTPPRSPSPEPTV. Positions 239–262 are enriched in pro residues; it reads ETPPTQHPTPGPMGPSPPPAPAPS. Position 275 is a phosphothreonine; by CDK1 (Thr-275). Residues 285–613 form the NR LBD domain; sequence TVEDVISQVA…KLLSFRVDAQ (329 aa). Cys-417 contacts heme. N6-acetyllysine is present on Lys-590. His-601 contributes to the heme binding site.

It belongs to the nuclear hormone receptor family. NR1 subfamily. In terms of assembly, binds DNA as a monomer or a homodimer. Interacts with C1D, SP1 and ZNHIT1. Interacts with OPHN1 (via C-terminus). Interacts with PER2; the interaction associates PER2 to BMAL1 promoter region. Interacts with CRY1. Interacts with CCAR2. Interacts with NR2E3. Interacts with SIAH2. Interacts with FBXW7 and CDK1. Interacts with HUWE1. Interacts with NR0B2. Interacts with NFIL3. Interacts (via domain NR LBD) with HSP90AA1 and HSP90AB1. Ubiquitinated, leading to its proteasomal degradation. Ubiquitinated by the SCF(FBXW7) complex when phosphorylated by CDK1 leading to its proteasomal degradation. Ubiquitinated by SIAH2; leading to its proteasomal degradation. Rapidly ubiquitinated in response to inflammatory triggers and sumoylation is a prerequisite to its ubiquitination. In terms of processing, sumoylated by UBE2I, desumoylated by SENP1, and sumoylation is a prerequisite to its ubiquitination. Post-translationally, phosphorylated by CSNK1E; phosphorylation enhances its cytoplasmic localization. Undergoes lysosome-mediated degradation in a time-dependent manner in the liver. As to expression, expressed in all tissues and cell lines examined. Expressed at high levels in some squamous carcinoma cell lines.

Its subcellular location is the nucleus. The protein localises to the cytoplasm. It localises to the cell projection. The protein resides in the dendrite. It is found in the dendritic spine. In terms of biological role, transcriptional repressor which coordinates circadian rhythm and metabolic pathways in a heme-dependent manner. Integral component of the complex transcription machinery that governs circadian rhythmicity and forms a critical negative limb of the circadian clock by directly repressing the expression of core clock components BMAL1, CLOCK and CRY1. Also regulates genes involved in metabolic functions, including lipid and bile acid metabolism, adipogenesis, gluconeogenesis and the macrophage inflammatory response. Acts as a receptor for heme which stimulates its interaction with the NCOR1/HDAC3 corepressor complex, enhancing transcriptional repression. Recognizes two classes of DNA response elements within the promoter of its target genes and can bind to DNA as either monomers or homodimers, depending on the nature of the response element. Binds as a monomer to a response element composed of the consensus half-site motif 5'-[A/G]GGTCA-3' preceded by an A/T-rich 5' sequence (RevRE), or as a homodimer to a direct repeat of the core motif spaced by two nucleotides (RevDR-2). Acts as a potent competitive repressor of ROR alpha (RORA) function and regulates the levels of its ligand heme by repressing the expression of PPARGC1A, a potent inducer of heme synthesis. Regulates lipid metabolism by repressing the expression of APOC3 and by influencing the activity of sterol response element binding proteins (SREBPs); represses INSIG2 which interferes with the proteolytic activation of SREBPs which in turn govern the rhythmic expression of enzymes with key functions in sterol and fatty acid synthesis. Regulates gluconeogenesis via repression of G6PC1 and PEPCK and adipocyte differentiation via repression of PPARG. Regulates glucagon release in pancreatic alpha-cells via the AMPK-NAMPT-SIRT1 pathway and the proliferation, glucose-induced insulin secretion and expression of key lipogenic genes in pancreatic-beta cells. Positively regulates bile acid synthesis by increasing hepatic expression of CYP7A1 via repression of NR0B2 and NFIL3 which are negative regulators of CYP7A1. Modulates skeletal muscle oxidative capacity by regulating mitochondrial biogenesis and autophagy; controls mitochondrial biogenesis and respiration by interfering with the STK11-PRKAA1/2-SIRT1-PPARGC1A signaling pathway. Represses the expression of SERPINE1/PAI1, an important modulator of cardiovascular disease and the expression of inflammatory cytokines and chemokines in macrophages. Represses gene expression at a distance in macrophages by inhibiting the transcription of enhancer-derived RNAs (eRNAs). Plays a role in the circadian regulation of body temperature and negatively regulates thermogenic transcriptional programs in brown adipose tissue (BAT); imposes a circadian oscillation in BAT activity, increasing body temperature when awake and depressing thermogenesis during sleep. In concert with NR2E3, regulates transcriptional networks critical for photoreceptor development and function. In addition to its activity as a repressor, can also act as a transcriptional activator. In the ovarian granulosa cells acts as a transcriptional activator of STAR which plays a role in steroid biosynthesis. In collaboration with SP1, activates GJA1 transcription in a heme-independent manner. Represses the transcription of CYP2B10, CYP4A10 and CYP4A14. Represses the transcription of CES2. Represses and regulates the circadian expression of TSHB in a NCOR1-dependent manner. Negatively regulates the protein stability of NR3C1 and influences the time-dependent subcellular distribution of NR3C1, thereby affecting its transcriptional regulatory activity. Plays a critical role in the circadian control of neutrophilic inflammation in the lung; under resting, non-stress conditions, acts as a rhythmic repressor to limit inflammatory activity whereas in the presence of inflammatory triggers undergoes ubiquitin-mediated degradation thereby relieving inhibition of the inflammatory response. Plays a key role in the circadian regulation of microglial activation and neuroinflammation; suppresses microglial activation through the NF-kappaB pathway in the central nervous system. Plays a role in the regulation of the diurnal rhythms of lipid and protein metabolism in the skeletal muscle via transcriptional repression of genes controlling lipid and amino acid metabolism in the muscle. The protein is Nuclear receptor subfamily 1 group D member 1 (NR1D1) of Bos taurus (Bovine).